The chain runs to 201 residues: Peptidyl-tRNA hydrolase (201 aa).

Y17 provides a ligand contact to tRNA. Residue H22 is the Proton acceptor of the active site. The tRNA site is built by F76, N78, and N124.

The protein belongs to the PTH family. As to quaternary structure, monomer.

Its subcellular location is the cytoplasm. It carries out the reaction an N-acyl-L-alpha-aminoacyl-tRNA + H2O = an N-acyl-L-amino acid + a tRNA + H(+). Hydrolyzes ribosome-free peptidyl-tRNAs (with 1 or more amino acids incorporated), which drop off the ribosome during protein synthesis, or as a result of ribosome stalling. Functionally, catalyzes the release of premature peptidyl moieties from peptidyl-tRNA molecules trapped in stalled 50S ribosomal subunits, and thus maintains levels of free tRNAs and 50S ribosomes. This chain is Peptidyl-tRNA hydrolase, found in Oleidesulfovibrio alaskensis (strain ATCC BAA-1058 / DSM 17464 / G20) (Desulfovibrio alaskensis).